A 2785-amino-acid chain; its full sequence is Testis-expressed protein 15 (2785 aa).

Over residues 262–274 (SSSFPSSLSNAFS) the composition is skewed to low complexity. Disordered stretches follow at residues 262-331 (SSSF…PSSD), 596-620 (EQRDDKNPNEAKEHNTDNINGSEKQ), 661-683 (NGKPAETASSESEAVEQRHAPND), 904-924 (TESTEPETNKEGNASGFGMCS), 943-1064 (VQES…QGRI), 2276-2458 (NRQE…TNDK), 2470-2511 (DIDA…LVPD), and 2571-2601 (TQPIKSESPKKSMTDAPNPNTAPFGSYGNSA). Positions 275-286 (DVRKQKHSEEQV) are enriched in basic and acidic residues. Over residues 314–331 (TCSNDSQGHFSQESPSSD) the composition is skewed to polar residues. The span at 596-611 (EQRDDKNPNEAKEHNT) shows a compositional bias: basic and acidic residues. Composition is skewed to polar residues over residues 962–989 (HNTHVDQGSGKPNNDSLSTEPSNVTVMN) and 1021–1031 (HASSSRGQNIA). Over residues 1033–1042 (KDLREHETHE) the composition is skewed to basic and acidic residues. Polar residues-rich tracts occupy residues 1049 to 1064 (SHGSSDRFSSLSQGRI), 2291 to 2314 (DSSQPGVSEQTPPGTECTVKNISD), 2327 to 2338 (EVSQGKGNTDTV), 2353 to 2387 (NIQTVSKHPSTTGSPPNDENKIGSNSSDSLKSISA), 2394 to 2415 (RQSSVLGSVSPAESVQDTCTPK), 2431 to 2454 (ASLTEQQENSNVIEKRNGNSSVAE), 2491 to 2502 (DHTQISPSNLTA), and 2585 to 2601 (DAPNPNTAPFGSYGNSA).

Belongs to the TEX15 family. In terms of assembly, interacts with PIWIL4. Interacts with PIWIL2. Detected in testis and ovary, and at lower levels in lung and brain.

The protein resides in the cytoplasm. Its subcellular location is the nucleus. Required during spermatogenesis for normal chromosome synapsis and meiotic recombination in germ cells. Necessary for formation of DMC1 and RAD51 foci on meiotic chromosomes, suggesting a specific role in DNA double-stranded break repair. Essential executor of PIWIL4-piRNA pathway directed transposon DNA methylation and silencing in the male embryonic germ cells. PIWIL4-piRNA binds to nascent transposon transcripts and interacts with TEX15, which may in turn recruit the epigenetic silencing machinery to the transposon loci. Not required for piRNA biosynthesis. The protein is Testis-expressed protein 15 of Mus musculus (Mouse).